The following is a 693-amino-acid chain: MLNPIVRKFQYGQHIVTLETGIMARQATAAVLTSMDDTTVFVTVVGQKKLQTEQKFFPMTVNYQERTYAAGRIPGGFFRREGRPSENEILIARLIDRPIRPLFPKRFFNEVQIIATVVSLNPQVNPDIVAIIGASAALSISGMPFLGPIGAARIGYINNQYILNPNVNEIKSSSLDLIISGTEESVLMVEAEANMLTEEQIINAINYGHEQQKIVIKNIEHFAKKVKIPVWEQCLYPVNDDLEKRIIEISEQEIVKAYNIFDKVIRLDVLDKIKSKAIEIIISEYSGIDEFEITSIISNIERKIVRNRVLKNRIRIDGRNKDEIRTLDVRTGVLPRVHGSALFTRGETQSLVSVTLGTSRDAQNLDELLGDKTDNFLFHYNFPPYAVGEIGMVGSPKRREIGHGKLAKRSILAVMPKLDLFPYTIRIVSEITESNGSSSMASVCGASLALMDAGVPISNAIAGIAMGLIKEGDDFVVLTDILGDEDHLGDMDFKISGSKKGITALQMDIKVKGITNEIMKLALYQAKNARIHILNIMKKSLNVPRKDISIFAPRIHTIKINPEKIKDVIGKGGSVIRMLTEETGTTIEIEDDGTVKISAVMQEKAKCAIQRIKEITAEVEVGSVYTGKVTRIVDFGAFVSIGIGKEGLVHISQIAHKRVDKVSDHLRLHQEIFVKVLEVDRQGRLRLSIKGAK.

Mg(2+) contacts are provided by Asp-486 and Asp-492. A KH domain is found at 553-612 (PRIHTIKINPEKIKDVIGKGGSVIRMLTEETGTTIEIEDDGTVKISAVMQEKAKCAIQRI). The 69-residue stretch at 622–690 (GSVYTGKVTR…RQGRLRLSIK (69 aa)) folds into the S1 motif domain.

It belongs to the polyribonucleotide nucleotidyltransferase family. In terms of assembly, component of the RNA degradosome, which is a multiprotein complex involved in RNA processing and mRNA degradation. Mg(2+) serves as cofactor.

The protein localises to the cytoplasm. It catalyses the reaction RNA(n+1) + phosphate = RNA(n) + a ribonucleoside 5'-diphosphate. Functionally, involved in mRNA degradation. Catalyzes the phosphorolysis of single-stranded polyribonucleotides processively in the 3'- to 5'-direction. The sequence is that of Polyribonucleotide nucleotidyltransferase from Buchnera aphidicola subsp. Baizongia pistaciae (strain Bp).